Consider the following 286-residue polypeptide: Probable endonuclease 4 (286 aa).

9 residues coordinate Zn(2+): H67, H107, E144, D178, H181, H215, D228, H230, and E260.

This sequence belongs to the AP endonuclease 2 family. It depends on Zn(2+) as a cofactor.

It catalyses the reaction Endonucleolytic cleavage to 5'-phosphooligonucleotide end-products.. Its function is as follows. Endonuclease IV plays a role in DNA repair. It cleaves phosphodiester bonds at apurinic or apyrimidinic (AP) sites, generating a 3'-hydroxyl group and a 5'-terminal sugar phosphate. The chain is Probable endonuclease 4 from Chloroflexus aggregans (strain MD-66 / DSM 9485).